The following is a 329-amino-acid chain: 36 kDa antigen (329 aa).

Residues 11–31 (AILTGGGALLLGLIVLFYLAY) traverse the membrane as a helical segment.

It belongs to the membrane fusion protein (MFP) (TC 8.A.1) family.

It is found in the membrane. The polypeptide is 36 kDa antigen (Helicobacter pylori (strain ATCC 700392 / 26695) (Campylobacter pylori)).